Here is a 372-residue protein sequence, read N- to C-terminus: Alpha-1-antitrypsin homolog (372 aa).

The signal sequence occupies residues 1–19; the sequence is MPATCLLHTMLTLPSPSTR. N-linked (GlcNAc...) asparagine glycosylation is found at asparagine 214 and asparagine 226. Positions 328 to 347 are RCL; sequence AATTIEIMPMSLPDTVILNR.

Belongs to the serpin family.

Its subcellular location is the secreted. This Cyprinus carpio (Common carp) protein is Alpha-1-antitrypsin homolog.